The chain runs to 317 residues: UV DNA damage endonuclease (317 aa).

This sequence belongs to the uve1/UvsE family.

Functionally, component in a DNA repair pathway. Removal of UV LIGHT damaged nucleotides. Recognizes pyrimidine dimers and cleave a phosphodiester bond immediately 5' to the lesion. This is UV DNA damage endonuclease from Bacillus thuringiensis subsp. konkukian (strain 97-27).